Here is a 50-residue protein sequence, read N- to C-terminus: Omwaprin-a (50 aa).

Positions 3 to 47 constitute a WAP domain; the sequence is RPKKPGLCPPRPQKPCVKECKNDDSCPGQQKCCNYGCKDECRDPI. 4 disulfide bridges follow: Cys-10-Cys-35, Cys-18-Cys-39, Cys-22-Cys-34, and Cys-28-Cys-43.

This sequence belongs to the venom waprin family. As to expression, expressed by the venom gland.

It localises to the secreted. Its function is as follows. Damages membranes of susceptible bacteria. Has antibacterial activity against the Gram-positive bacteria B.megaterium and S.warneri. After a 45-minute treatment with this protein, B.megaterium have no visible pili and are smooth. Has no antibacterial activity against the Gram-positive bacteria B.thuringiensis, S.aureus, S.clavuligerus and B.anthracis, or the Gram-negative bacteria E.coli and A.tumefaciens. Has no hemolytic activity. Does not inhibit the proteinases elastase and cathepsin G. Is not toxic to mice. The protein is Omwaprin-a of Oxyuranus microlepidotus (Inland taipan).